Consider the following 147-residue polypeptide: MKEETFYLVREDVLPDAMRKTLEVKKLLDRKKAESVADAVQKVDLSRSAFYKYRDAVFPFYTMVKEQIITLFFHLEDRSGALSQLLQAVADSGSNVLSIHQTIPLQGRANVTLSISTSAMEENIHTLMNKLRKFDFIEKVEILGSGA.

In terms of domain architecture, ACT spans 70-145; that stretch reads TLFFHLEDRS…FIEKVEILGS (76 aa).

This sequence belongs to the UPF0735 family.

In Bacillus velezensis (strain DSM 23117 / BGSC 10A6 / LMG 26770 / FZB42) (Bacillus amyloliquefaciens subsp. plantarum), this protein is UPF0735 ACT domain-containing protein RBAM_024960.